We begin with the raw amino-acid sequence, 388 residues long: Succinate--CoA ligase [ADP-forming] subunit beta (388 aa).

The 236-residue stretch at 9 to 244 (KQLFADYGLP…PSQEDPREAH (236 aa)) folds into the ATP-grasp domain. ATP contacts are provided by residues K46, 53-55 (GRG), E99, T102, and E107. 2 residues coordinate Mg(2+): N199 and D213. Substrate contacts are provided by residues N264 and 321 to 323 (GIV).

This sequence belongs to the succinate/malate CoA ligase beta subunit family. Heterotetramer of two alpha and two beta subunits. Mg(2+) is required as a cofactor.

The enzyme catalyses succinate + ATP + CoA = succinyl-CoA + ADP + phosphate. It carries out the reaction GTP + succinate + CoA = succinyl-CoA + GDP + phosphate. It functions in the pathway carbohydrate metabolism; tricarboxylic acid cycle; succinate from succinyl-CoA (ligase route): step 1/1. Functionally, succinyl-CoA synthetase functions in the citric acid cycle (TCA), coupling the hydrolysis of succinyl-CoA to the synthesis of either ATP or GTP and thus represents the only step of substrate-level phosphorylation in the TCA. The beta subunit provides nucleotide specificity of the enzyme and binds the substrate succinate, while the binding sites for coenzyme A and phosphate are found in the alpha subunit. This chain is Succinate--CoA ligase [ADP-forming] subunit beta, found in Hahella chejuensis (strain KCTC 2396).